The primary structure comprises 344 residues: Holliday junction branch migration complex subunit RuvB (344 aa).

The interval 1–182 (MRIELLNTPP…FGINSRFDYY (182 aa)) is large ATPase domain (RuvB-L). ATP contacts are provided by residues Ile21, Arg22, Gly63, Lys66, Thr67, Thr68, 129-131 (EDF), Arg172, Tyr182, and Arg219. Thr67 is a binding site for Mg(2+). The segment at 183–253 (APELLEGIIR…IAMKTLDCLE (71 aa)) is small ATPAse domain (RuvB-S). The tract at residues 256 to 344 (EEGLDDMDKK…ISLFDAQPTS (89 aa)) is head domain (RuvB-H). Residues Arg311 and Arg316 each contribute to the DNA site.

This sequence belongs to the RuvB family. As to quaternary structure, homohexamer. Forms an RuvA(8)-RuvB(12)-Holliday junction (HJ) complex. HJ DNA is sandwiched between 2 RuvA tetramers; dsDNA enters through RuvA and exits via RuvB. An RuvB hexamer assembles on each DNA strand where it exits the tetramer. Each RuvB hexamer is contacted by two RuvA subunits (via domain III) on 2 adjacent RuvB subunits; this complex drives branch migration. In the full resolvosome a probable DNA-RuvA(4)-RuvB(12)-RuvC(2) complex forms which resolves the HJ.

Its subcellular location is the cytoplasm. The enzyme catalyses ATP + H2O = ADP + phosphate + H(+). Functionally, the RuvA-RuvB-RuvC complex processes Holliday junction (HJ) DNA during genetic recombination and DNA repair, while the RuvA-RuvB complex plays an important role in the rescue of blocked DNA replication forks via replication fork reversal (RFR). RuvA specifically binds to HJ cruciform DNA, conferring on it an open structure. The RuvB hexamer acts as an ATP-dependent pump, pulling dsDNA into and through the RuvAB complex. RuvB forms 2 homohexamers on either side of HJ DNA bound by 1 or 2 RuvA tetramers; 4 subunits per hexamer contact DNA at a time. Coordinated motions by a converter formed by DNA-disengaged RuvB subunits stimulates ATP hydrolysis and nucleotide exchange. Immobilization of the converter enables RuvB to convert the ATP-contained energy into a lever motion, pulling 2 nucleotides of DNA out of the RuvA tetramer per ATP hydrolyzed, thus driving DNA branch migration. The RuvB motors rotate together with the DNA substrate, which together with the progressing nucleotide cycle form the mechanistic basis for DNA recombination by continuous HJ branch migration. Branch migration allows RuvC to scan DNA until it finds its consensus sequence, where it cleaves and resolves cruciform DNA. The sequence is that of Holliday junction branch migration complex subunit RuvB from Pelodictyon phaeoclathratiforme (strain DSM 5477 / BU-1).